We begin with the raw amino-acid sequence, 225 residues long: 7-cyano-7-deazaguanine synthase (225 aa).

An ATP-binding site is contributed by 10–20 (VSGGLDSTTVI). 4 residues coordinate Zn(2+): cysteine 189, cysteine 199, cysteine 202, and cysteine 205.

Belongs to the QueC family. Zn(2+) serves as cofactor.

The catalysed reaction is 7-carboxy-7-deazaguanine + NH4(+) + ATP = 7-cyano-7-deazaguanine + ADP + phosphate + H2O + H(+). It participates in purine metabolism; 7-cyano-7-deazaguanine biosynthesis. Its function is as follows. Catalyzes the ATP-dependent conversion of 7-carboxy-7-deazaguanine (CDG) to 7-cyano-7-deazaguanine (preQ(0)). The protein is 7-cyano-7-deazaguanine synthase of Cellvibrio japonicus (strain Ueda107) (Pseudomonas fluorescens subsp. cellulosa).